A 100-amino-acid polypeptide reads, in one-letter code: MSESPHDHAGDPVRLSAWVHGHVQGVGFRWWTRSRALESGLTGYARNAPDGRVHVIAEGPRERCERLLELLRSGTTPGRVSLVVESWEPARGDLTGFEER.

The region spanning 14-100 (RLSAWVHGHV…RGDLTGFEER (87 aa)) is the Acylphosphatase-like domain. Catalysis depends on residues arginine 29 and asparagine 47.

Belongs to the acylphosphatase family.

The catalysed reaction is an acyl phosphate + H2O = a carboxylate + phosphate + H(+). The polypeptide is Acylphosphatase (acyP) (Nocardia farcinica (strain IFM 10152)).